A 337-amino-acid polypeptide reads, in one-letter code: Diacylglycerol acyltransferase/mycolyltransferase Ag85A (337 aa).

The N-terminal stretch at 1 to 42 is a signal peptide; that stretch reads MKLVDRFRGAATGTSRRLMVGAVGAALLSGLVGFVGGSATAS. Residue 85–86 participates in substrate binding; that stretch reads MR. Residues 101 to 111 are fibronectin-binding; that stretch reads FEWYYQSGISV. A disulfide bridge links cysteine 130 with cysteine 135. Substrate is bound by residues serine 169 and aspartate 197. The active-site Nucleophile is serine 169. The active site involves glutamate 273. Residues 275-278, lysine 282, and 305-307 contribute to the substrate site; these read FVRT and HSW. Residue histidine 305 is part of the active site.

The protein belongs to the mycobacterial A85 antigen family. As to quaternary structure, homodimer.

It is found in the secreted. Its subcellular location is the cell wall. The protein localises to the cytoplasm. The catalysed reaction is an acyl-CoA + a 1,2-diacyl-sn-glycerol = a triacyl-sn-glycerol + CoA. It carries out the reaction 2 alpha,alpha'-trehalose 6-mycolate = alpha,alpha'-trehalose 6,6'-bismycolate + alpha,alpha-trehalose. Functionally, the antigen 85 proteins (FbpA, FbpB, FbpC) are responsible for the high affinity of mycobacteria for fibronectin, a large adhesive glycoprotein, which facilitates the attachment of M.tuberculosis to murine alveolar macrophages (AMs). They also help to maintain the integrity of the cell wall by catalyzing the transfer of mycolic acids to cell wall arabinogalactan, and through the synthesis of alpha,alpha-trehalose dimycolate (TDM, cord factor). They catalyze the transfer of a mycoloyl residue from one molecule of alpha,alpha-trehalose monomycolate (TMM) to another TMM, leading to the formation of TDM. FbpA mediates triacylglycerol (TAG) formation with long-chain acyl-CoA as the acyl donor and 1,2-dipalmitoyl-sn-glycerol (1,2-dipalmitin) as the acyl acceptor. It has a preference for C26:0-CoA over C18:1-CoA. The chain is Diacylglycerol acyltransferase/mycolyltransferase Ag85A (fbpA) from Mycobacterium ulcerans.